The chain runs to 338 residues: Glyceraldehyde-3-phosphate dehydrogenase, cytosolic (338 aa).

Positions 2–153 are binding to NAD; that stretch reads ADKKIKIGIN…YKSDLNIVSN (152 aa). NAD(+)-binding positions include 15–16 and Asp-37; that span reads RI. An external loop region spans residues 56-75; sequence GQWKHNELKVKDEKTLLFGE. Position 84 (Arg-84) interacts with NAD(+). The catalytic stretch occupies residues 154–338; it reads ASCTTNCLAP…VDLIIHMSKA (185 aa). 155-157 contributes to the D-glyceraldehyde 3-phosphate binding site; sequence SCT. Catalysis depends on Cys-156, which acts as the Nucleophile. An S-nitrosocysteine mark is found at Cys-156 and Cys-160. The S-loop stretch occupies residues 183–206; that stretch reads HSITATQKTVDGPSMKDWRGGRAA. Residues Thr-186, 215 to 216, and Arg-238 contribute to the D-glyceraldehyde 3-phosphate site; that span reads TG. Asn-320 is an NAD(+) binding site.

This sequence belongs to the glyceraldehyde-3-phosphate dehydrogenase family. In terms of assembly, homotetramer.

The protein localises to the cytoplasm. The enzyme catalyses D-glyceraldehyde 3-phosphate + phosphate + NAD(+) = (2R)-3-phospho-glyceroyl phosphate + NADH + H(+). The protein operates within carbohydrate degradation; glycolysis; pyruvate from D-glyceraldehyde 3-phosphate: step 1/5. Its function is as follows. Key enzyme in glycolysis that catalyzes the first step of the pathway by converting D-glyceraldehyde 3-phosphate (G3P) into 3-phospho-D-glyceroyl phosphate. Essential for the maintenance of cellular ATP levels and carbohydrate metabolism. This Sinapis alba (White mustard) protein is Glyceraldehyde-3-phosphate dehydrogenase, cytosolic (GAPC).